The chain runs to 438 residues: V-type ATP synthase beta chain (438 aa).

Belongs to the ATPase alpha/beta chains family.

Produces ATP from ADP in the presence of a proton gradient across the membrane. The V-type beta chain is a regulatory subunit. In Chlamydia muridarum (strain MoPn / Nigg), this protein is V-type ATP synthase beta chain (atpB).